Consider the following 115-residue polypeptide: Histone H2A.Z-specific chaperone chz1 (115 aa).

Residues 1–10 (MGDNNRATFS) are compositionally biased toward polar residues. The disordered stretch occupies residues 1 to 115 (MGDNNRATFS…FEPNDNDMRN (115 aa)). Over residues 11–21 (NDPAANAPDAA) the composition is skewed to low complexity. Basic and acidic residues predominate over residues 22 to 32 (AVEKGKGKAVE). Positions 39–62 (SMDEDEESEESEAEEIEDDEDDHD) are enriched in acidic residues. The segment covering 82–95 (KTIDFQEAAEKLKD) has biased composition (basic and acidic residues). The segment covering 96–115 (EMDEDDDDEDFEPNDNDMRN) has biased composition (acidic residues).

This sequence belongs to the CHZ1 family. Forms a heterotrimer with H2A.Z-H2B, stabilizing the association of the histone dimer. Also, with a lower affinity, forms a heterotrimer with H2A-H2B.

It is found in the nucleus. In terms of biological role, forms a chaperone-bound H2A.Z-H2B complex that acts as a source for SWR1 complex-dependent H2A to H2A.Z histone replacement in chromatin. The polypeptide is Histone H2A.Z-specific chaperone chz1 (chz1) (Aspergillus clavatus (strain ATCC 1007 / CBS 513.65 / DSM 816 / NCTC 3887 / NRRL 1 / QM 1276 / 107)).